Consider the following 301-residue polypeptide: tRNA dimethylallyltransferase (301 aa).

9 to 16 (GPTASGKS) is an ATP binding site. 11-16 (TASGKS) serves as a coordination point for substrate. The segment at 34 to 37 (DSMQ) is interaction with substrate tRNA.

It belongs to the IPP transferase family. As to quaternary structure, monomer. It depends on Mg(2+) as a cofactor.

It catalyses the reaction adenosine(37) in tRNA + dimethylallyl diphosphate = N(6)-dimethylallyladenosine(37) in tRNA + diphosphate. In terms of biological role, catalyzes the transfer of a dimethylallyl group onto the adenine at position 37 in tRNAs that read codons beginning with uridine, leading to the formation of N6-(dimethylallyl)adenosine (i(6)A). This Corynebacterium glutamicum (strain ATCC 13032 / DSM 20300 / JCM 1318 / BCRC 11384 / CCUG 27702 / LMG 3730 / NBRC 12168 / NCIMB 10025 / NRRL B-2784 / 534) protein is tRNA dimethylallyltransferase.